The sequence spans 295 residues: Bifunctional protein FolD (295 aa).

Residues 166-168 (GRS), serine 195, and isoleucine 236 contribute to the NADP(+) site.

It belongs to the tetrahydrofolate dehydrogenase/cyclohydrolase family. As to quaternary structure, homodimer.

The catalysed reaction is (6R)-5,10-methylene-5,6,7,8-tetrahydrofolate + NADP(+) = (6R)-5,10-methenyltetrahydrofolate + NADPH. The enzyme catalyses (6R)-5,10-methenyltetrahydrofolate + H2O = (6R)-10-formyltetrahydrofolate + H(+). Its pathway is one-carbon metabolism; tetrahydrofolate interconversion. Its function is as follows. Catalyzes the oxidation of 5,10-methylenetetrahydrofolate to 5,10-methenyltetrahydrofolate and then the hydrolysis of 5,10-methenyltetrahydrofolate to 10-formyltetrahydrofolate. The sequence is that of Bifunctional protein FolD from Chlorobium phaeovibrioides (strain DSM 265 / 1930) (Prosthecochloris vibrioformis (strain DSM 265)).